Consider the following 165-residue polypeptide: Protein YELLOW LEAF 1, choloroplastic (165 aa).

A chloroplast-targeting transit peptide spans 1 to 51; it reads MPPLATMSSPGSLLLLTPAVYQGIGRNRGGQSQEGQSISSSRSLKTKLSVS. The tract at residues 71-118 is disordered; sequence TQTARRKSFSGPTSPPSGSVKEKVRSPKLDDGGTGFPPFRFGGGGGGG. Residues 79–89 show a composition bias toward low complexity; the sequence is FSGPTSPPSGS. Over residues 90 to 101 the composition is skewed to basic and acidic residues; the sequence is VKEKVRSPKLDD.

As to quaternary structure, interacts with atpB. As to expression, highly expressed in leaves. Expressed in leaf sheaths. Expressed at low levels in stems.

The protein resides in the plastid. It is found in the chloroplast. Its function is as follows. Required for photosynthetic protein complex assembly in chloroplast thylakoid membranes during leaf development. Maintains the abundance of the core protein complex PsaA-PsaB of photosystem I (PSI) in the thylakoid membrane. May play a role in the efficient biogenesis of the chloroplast ATP synthase complex, possibly by interacting with the beta subunit atpB. This Oryza sativa subsp. japonica (Rice) protein is Protein YELLOW LEAF 1, choloroplastic.